The following is a 61-amino-acid chain: Small ribosomal subunit protein uS14 (61 aa).

4 residues coordinate Zn(2+): Cys24, Cys27, Cys40, and Cys43.

It belongs to the universal ribosomal protein uS14 family. Zinc-binding uS14 subfamily. In terms of assembly, part of the 30S ribosomal subunit. Contacts proteins S3 and S10. It depends on Zn(2+) as a cofactor.

Functionally, binds 16S rRNA, required for the assembly of 30S particles and may also be responsible for determining the conformation of the 16S rRNA at the A site. This chain is Small ribosomal subunit protein uS14, found in Desulfosudis oleivorans (strain DSM 6200 / JCM 39069 / Hxd3) (Desulfococcus oleovorans).